The following is a 396-amino-acid chain: Vacuolar protease A (396 aa).

A signal peptide spans 1-17 (MKGALLTAAMLLGSAQA). The propeptide at 18–70 (GVHTMKLKKVPLAEQLESVPIDVQVQHLGQKYTGLRTESHTQAMFKATDAQVS) is activation peptide. Residues 85–392 (YFSEITIGTP…DLGADTVGIA (308 aa)) enclose the Peptidase A1 domain. Aspartate 103 is a catalytic residue. Cysteines 116 and 121 form a disulfide. N-linked (GlcNAc...) asparagine glycosylation occurs at asparagine 138. Aspartate 284 is a catalytic residue. Cysteine 318 and cysteine 351 are disulfide-bonded. The N-linked (GlcNAc...) asparagine glycan is linked to asparagine 335.

It belongs to the peptidase A1 family.

Its subcellular location is the vacuole. This Neurospora crassa (strain ATCC 24698 / 74-OR23-1A / CBS 708.71 / DSM 1257 / FGSC 987) protein is Vacuolar protease A (pep-4).